The primary structure comprises 122 residues: Large ribosomal subunit protein uL14 (122 aa).

It belongs to the universal ribosomal protein uL14 family. In terms of assembly, part of the 50S ribosomal subunit. Forms a cluster with proteins L3 and L19. In the 70S ribosome, L14 and L19 interact and together make contacts with the 16S rRNA in bridges B5 and B8.

Its function is as follows. Binds to 23S rRNA. Forms part of two intersubunit bridges in the 70S ribosome. This is Large ribosomal subunit protein uL14 from Trichodesmium erythraeum (strain IMS101).